The following is a 595-amino-acid chain: Sorting nexin-9 (595 aa).

An SH3 domain is found at 1-62 (MATKARVMYD…PTDYVEILPN (62 aa)). Positions 89 to 100 (QTNSSSANSNNQ) are enriched in low complexity. Positions 89 to 199 (QTNSSSANSN…QRGNSRAGAS (111 aa)) are disordered. At Ser-121 the chain carries Phosphoserine. The segment covering 129–144 (TDGTSAQRNSSANNWD) has biased composition (polar residues). The span at 159–169 (GDDDEWDEDWD) shows a compositional bias: acidic residues. Ser-200 is modified (phosphoserine). The segment at 201–213 (MKLPLNKFPGFAK) is critical for tubulation activity. Phosphotyrosine is present on Tyr-239. One can recognise a PX domain in the interval 250-360 (FDCVVADPRK…QQFLNFRDEK (111 aa)). A 1,2-diacyl-sn-glycero-3-phospho-(1D-myo-inositol-4,5-bisphosphate) contacts are provided by Arg-286, Lys-288, and Arg-327. Residue Lys-288 is modified to N6-acetyllysine. A BAR domain is found at 392-595 (LIEIEQKCDA…RQALSRFPVM (204 aa)).

The protein belongs to the sorting nexin family. Homodimer, and homooligomer. Heterodimer with SNX18. Interacts with ITCH. Interacts (via SH3 domain) with TNK2, WASL and ACTR3. Identified in a complex with TNK2 and clathrin heavy chains. Identified in a complex with the AP-2 complex, clathrin and DNM2. Interacts (via SH3 domain) with DNM1 and DNM2. Identified in an oligomeric complex containing DNM1 and SNX9. Interacts with FCHSD1. Interacts with ADAM9 and ADAM15 cytoplasmic tails. Phosphorylated on tyrosine residues by TNK2. Phosphorylation promotes its activity in the degradation of EGFR. In terms of processing, ubiquitinated by ITCH. Detected in inner ear vestibula and in the cuticular plate of cochlear hair cells (at protein level).

The protein resides in the cytoplasmic vesicle membrane. It is found in the cell membrane. The protein localises to the cytoplasmic vesicle. Its subcellular location is the clathrin-coated vesicle. It localises to the golgi apparatus. The protein resides in the trans-Golgi network. It is found in the cell projection. The protein localises to the ruffle. Its subcellular location is the cytoplasm. Involved in endocytosis and intracellular vesicle trafficking, both during interphase and at the end of mitosis. Required for efficient progress through mitosis and cytokinesis. Required for normal formation of the cleavage furrow at the end of mitosis. Plays a role in endocytosis via clathrin-coated pits, but also clathrin-independent, actin-dependent fluid-phase endocytosis. Plays a role in macropinocytosis. Promotes internalization of TNFR. Promotes degradation of EGFR after EGF signaling. Stimulates the GTPase activity of DNM1. Promotes DNM1 oligomerization. Promotes activation of the Arp2/3 complex by WASL, and thereby plays a role in the reorganization of the F-actin cytoskeleton. Binds to membranes enriched in phosphatidylinositol 4,5-bisphosphate and promotes membrane tubulation. Has lower affinity for membranes enriched in phosphatidylinositol 3-phosphate. The chain is Sorting nexin-9 (Snx9) from Mus musculus (Mouse).